The sequence spans 513 residues: ATP synthase subunit alpha (513 aa).

Position 169 to 176 (169 to 176 (GDRQTGKT)) interacts with ATP.

This sequence belongs to the ATPase alpha/beta chains family. In terms of assembly, F-type ATPases have 2 components, CF(1) - the catalytic core - and CF(0) - the membrane proton channel. CF(1) has five subunits: alpha(3), beta(3), gamma(1), delta(1), epsilon(1). CF(0) has three main subunits: a(1), b(2) and c(9-12). The alpha and beta chains form an alternating ring which encloses part of the gamma chain. CF(1) is attached to CF(0) by a central stalk formed by the gamma and epsilon chains, while a peripheral stalk is formed by the delta and b chains.

The protein localises to the cell inner membrane. The catalysed reaction is ATP + H2O + 4 H(+)(in) = ADP + phosphate + 5 H(+)(out). Produces ATP from ADP in the presence of a proton gradient across the membrane. The alpha chain is a regulatory subunit. This is ATP synthase subunit alpha from Cupriavidus pinatubonensis (strain JMP 134 / LMG 1197) (Cupriavidus necator (strain JMP 134)).